A 366-amino-acid chain; its full sequence is MTDLTNQKDAALAAIAAATSLDALEEQRVAALGKKGWVSLALKTLGGMDPEERQKAAPAIQAVRAEVADAIAARKDALEREALEAQLATETLDLTLPAPQQRFGSVHPVSQVMDELAEIFADLGFAVATGPEIEDDWHNFTALNMAETHPARAMHDTFYFPDVDSEGRRMLLRTHTSPVQIRAMKAQGAPIRIIAPGRVYRSDSDATHTPMFHQVEGLVIDRDIHLGHLKWTLETFLKAFFEREDIVLRLRPSYFPFTEPSVEVDVGYSREGGRRVVGGDGNAEGHDWMELLGSGMVNRRVIEMAGLDPDEWQGFAWGLGVDRLAMLKYGMDDLRAFFDGDQRWLDHYGFSPFDQPTLSAGVGARS.

Glu-259 is a Mg(2+) binding site.

The protein belongs to the class-II aminoacyl-tRNA synthetase family. Phe-tRNA synthetase alpha subunit type 1 subfamily. Tetramer of two alpha and two beta subunits. Requires Mg(2+) as cofactor.

It localises to the cytoplasm. It catalyses the reaction tRNA(Phe) + L-phenylalanine + ATP = L-phenylalanyl-tRNA(Phe) + AMP + diphosphate + H(+). This Erythrobacter litoralis (strain HTCC2594) protein is Phenylalanine--tRNA ligase alpha subunit.